Reading from the N-terminus, the 337-residue chain is Ornithine carbamoyltransferase (337 aa).

Residues 56–59, Gln83, Arg107, and 134–137 each bind carbamoyl phosphate; these read STRT and HPTQ. L-ornithine contacts are provided by residues Asn168, Asp232, and 236-237; that span reads SM. Carbamoyl phosphate is bound by residues 274–275 and Arg320; that span reads CL.

It belongs to the aspartate/ornithine carbamoyltransferase superfamily. OTCase family.

Its subcellular location is the cytoplasm. The catalysed reaction is carbamoyl phosphate + L-ornithine = L-citrulline + phosphate + H(+). The protein operates within amino-acid biosynthesis; L-arginine biosynthesis; L-arginine from L-ornithine and carbamoyl phosphate: step 1/3. In terms of biological role, reversibly catalyzes the transfer of the carbamoyl group from carbamoyl phosphate (CP) to the N(epsilon) atom of ornithine (ORN) to produce L-citrulline. This is Ornithine carbamoyltransferase (argI) from Shigella flexneri.